We begin with the raw amino-acid sequence, 950 residues long: Glycine dehydrogenase (decarboxylating) (950 aa).

Residue Lys-698 is modified to N6-(pyridoxal phosphate)lysine.

The protein belongs to the GcvP family. In terms of assembly, the glycine cleavage system is composed of four proteins: P, T, L and H. Requires pyridoxal 5'-phosphate as cofactor.

It catalyses the reaction N(6)-[(R)-lipoyl]-L-lysyl-[glycine-cleavage complex H protein] + glycine + H(+) = N(6)-[(R)-S(8)-aminomethyldihydrolipoyl]-L-lysyl-[glycine-cleavage complex H protein] + CO2. In terms of biological role, the glycine cleavage system catalyzes the degradation of glycine. The P protein binds the alpha-amino group of glycine through its pyridoxal phosphate cofactor; CO(2) is released and the remaining methylamine moiety is then transferred to the lipoamide cofactor of the H protein. The chain is Glycine dehydrogenase (decarboxylating) from Neisseria meningitidis serogroup C / serotype 2a (strain ATCC 700532 / DSM 15464 / FAM18).